The following is a 415-amino-acid chain: Gamma-glutamyl phosphate reductase (415 aa).

It belongs to the gamma-glutamyl phosphate reductase family.

The protein resides in the cytoplasm. It catalyses the reaction L-glutamate 5-semialdehyde + phosphate + NADP(+) = L-glutamyl 5-phosphate + NADPH + H(+). It functions in the pathway amino-acid biosynthesis; L-proline biosynthesis; L-glutamate 5-semialdehyde from L-glutamate: step 2/2. Catalyzes the NADPH-dependent reduction of L-glutamate 5-phosphate into L-glutamate 5-semialdehyde and phosphate. The product spontaneously undergoes cyclization to form 1-pyrroline-5-carboxylate. The sequence is that of Gamma-glutamyl phosphate reductase from Bacillus velezensis (strain DSM 23117 / BGSC 10A6 / LMG 26770 / FZB42) (Bacillus amyloliquefaciens subsp. plantarum).